A 246-amino-acid chain; its full sequence is uncharacterized protein (246 aa).

2 disordered regions span residues 9-125 (CSRV…GAMA) and 155-203 (QPVR…EEKA). Positions 27–37 (GTRRQRQRPRQ) are enriched in basic residues. Pro residues-rich tracts occupy residues 54 to 64 (PRPPTGPPARY) and 101 to 117 (EPRPPPESPGAPPPPGS). Residues 161-176 (KLPKGKGRLRRPRQSR) show a composition bias toward basic residues. Position 179 is a phosphothreonine (threonine 179). Residues serine 196, serine 210, and serine 220 each carry the phosphoserine modification.

It is found in the cytoplasm. This is an uncharacterized protein from Mus musculus (Mouse).